We begin with the raw amino-acid sequence, 1377 residues long: DNA-directed RNA polymerase subunit beta' (1377 aa).

Residues Cys-70, Cys-72, Cys-85, and Cys-88 each contribute to the Zn(2+) site. Mg(2+)-binding residues include Asp-460, Asp-462, and Asp-464. 4 residues coordinate Zn(2+): Cys-808, Cys-882, Cys-889, and Cys-892.

It belongs to the RNA polymerase beta' chain family. As to quaternary structure, the RNAP catalytic core consists of 2 alpha, 1 beta, 1 beta' and 1 omega subunit. When a sigma factor is associated with the core the holoenzyme is formed, which can initiate transcription. Mg(2+) serves as cofactor. It depends on Zn(2+) as a cofactor.

The enzyme catalyses RNA(n) + a ribonucleoside 5'-triphosphate = RNA(n+1) + diphosphate. DNA-dependent RNA polymerase catalyzes the transcription of DNA into RNA using the four ribonucleoside triphosphates as substrates. The chain is DNA-directed RNA polymerase subunit beta' from Geotalea uraniireducens (strain Rf4) (Geobacter uraniireducens).